A 948-amino-acid polypeptide reads, in one-letter code: Phosphatidylinositol-glycan-specific phospholipase D (948 aa).

The first 24 residues, 1 to 24 (MKNKIILLWLLLIVILCTISNVKG), serve as a signal peptide directing secretion. Residues Asn39, Asn78, Asn148, Asn300, Asn433, Asn452, Asn506, and Asn535 are each glycosylated (N-linked (GlcNAc...) asparagine). FG-GAP repeat units lie at residues 451–512 (TNFT…SVTI), 526–588 (QVAT…NPAG), 596–656 (LPSI…RISG), and 663–724 (DADY…LNSF). N-linked (GlcNAc...) asparagine glycans are attached at residues Asn749 and Asn788. FG-GAP repeat units follow at residues 799–861 (NLLL…LTND) and 895–948 (SSGG…NIFQ).

Belongs to the GPLD1 family. Requires Ca(2+) as cofactor.

Its subcellular location is the secreted. It catalyses the reaction a 6-(alpha-D-glucosaminyl)-1-(1,2-diacyl-sn-glycero-3-phospho)-1D-myo-inositol + H2O = 6-(alpha-D-glucosaminyl)-1D-myo-inositol + a 1,2-diacyl-sn-glycero-3-phosphate + H(+). Its function is as follows. Hydrolyzes the inositol phosphate linkage in proteins anchored by phosphatidylinositol glycans (GPI-anchor) thus releasing these proteins from the membrane. May also cleave GPI anchor intermediates intracellularly. The chain is Phosphatidylinositol-glycan-specific phospholipase D (pldG) from Dictyostelium discoideum (Social amoeba).